Here is a 251-residue protein sequence, read N- to C-terminus: Ribonuclease HII (251 aa).

The 192-residue stretch at glycine 32 to leucine 223 folds into the RNase H type-2 domain. A divalent metal cation contacts are provided by aspartate 38, glutamate 39, and aspartate 132.

This sequence belongs to the RNase HII family. Requires Mn(2+) as cofactor. Mg(2+) is required as a cofactor.

It is found in the cytoplasm. It catalyses the reaction Endonucleolytic cleavage to 5'-phosphomonoester.. In terms of biological role, endonuclease that specifically degrades the RNA of RNA-DNA hybrids. This Nocardia farcinica (strain IFM 10152) protein is Ribonuclease HII.